A 492-amino-acid polypeptide reads, in one-letter code: Trypanothione reductase (492 aa).

Residue 36–52 (DVQMVHGPPFFSALGGT) participates in FAD binding. Cys-53 and Cys-58 are disulfide-bonded. His-461 functions as the Proton acceptor in the catalytic mechanism.

It belongs to the class-I pyridine nucleotide-disulfide oxidoreductase family. As to quaternary structure, homodimer. Requires FAD as cofactor.

It localises to the cytoplasm. The catalysed reaction is trypanothione + NADP(+) = trypanothione disulfide + NADPH + H(+). Trypanothione is the parasite analog of glutathione; this enzyme is the equivalent of glutathione reductase. This Trypanosoma cruzi protein is Trypanothione reductase (TPR).